Reading from the N-terminus, the 349-residue chain is Putative ABC transporter permease protein MJ0087 (349 aa).

Transmembrane regions (helical) follow at residues 15-35 (IIFG…ALCV), 69-89 (IFAA…MQCI), 100-120 (MGIS…FGFG), 135-155 (MITI…LLLA), 166-186 (ILAG…IQYF), 206-226 (AIWT…IYFM), 254-274 (LIGM…LGII), 295-315 (FLIP…DTFA), and 318-338 (IIAP…APMF).

The protein belongs to the binding-protein-dependent transport system permease family. FecCD subfamily.

The protein resides in the cell membrane. In terms of biological role, probably part of a binding-protein-dependent transport system. Probably responsible for the translocation of the substrate across the membrane. The polypeptide is Putative ABC transporter permease protein MJ0087 (Methanocaldococcus jannaschii (strain ATCC 43067 / DSM 2661 / JAL-1 / JCM 10045 / NBRC 100440) (Methanococcus jannaschii)).